The sequence spans 230 residues: MTTLTARPEAITFDPQQSALIVVDMQNAYATPGGYLDLAGFDVSTTRPVIANIQTAVTAARAAGMLIIWFQNGWDEQYVEAGGPGSPNFHKSNALKTMRKQPQLQGKLLAKGSWDYQLVDELVPQPGDIVLPKPRYSGFFNTPLDSILRSRGIRHLVFTGIATNVCVESTLRDGFFLEYFGVVLEDATHQAGPEFAQKAALFNIETFFGWVSDVETFCDALSSTSFARIA.

Asp-24 serves as the catalytic Proton acceptor. Lys-133 is a catalytic residue. The Nucleophile role is filled by Cys-166.

The protein belongs to the isochorismatase family. RutB subfamily.

The catalysed reaction is (Z)-3-ureidoacrylate + H2O + H(+) = (Z)-3-aminoacrylate + NH4(+) + CO2. It carries out the reaction (Z)-3-ureidoacrylate + H2O = (Z)-3-aminoacrylate + carbamate + H(+). It catalyses the reaction (Z)-2-methylureidoacrylate + H2O + H(+) = (Z)-2-methylaminoacrylate + NH4(+) + CO2. Functionally, hydrolyzes ureidoacrylate to form aminoacrylate and carbamate. The carbamate hydrolyzes spontaneously, thereby releasing one of the nitrogen atoms of the pyrimidine ring as ammonia and one of its carbon atoms as CO2. The polypeptide is Ureidoacrylate amidohydrolase RutB (Escherichia coli O150:H5 (strain SE15)).